A 1025-amino-acid chain; its full sequence is Beta-galactosidase (1025 aa).

Substrate-binding residues include asparagine 105 and aspartate 204. Aspartate 204 serves as a coordination point for Na(+). 3 residues coordinate Mg(2+): glutamate 417, histidine 419, and glutamate 462. Residues glutamate 462 and 538 to 541 (EYAH) each bind substrate. Glutamate 462 acts as the Proton donor in catalysis. Glutamate 538 acts as the Nucleophile in catalysis. Position 598 (asparagine 598) interacts with Mg(2+). Na(+) is bound by residues phenylalanine 602 and asparagine 605. Substrate contacts are provided by asparagine 605 and tryptophan 1003.

The protein belongs to the glycosyl hydrolase 2 family. Homotetramer. The cofactor is Mg(2+). It depends on Na(+) as a cofactor.

It carries out the reaction Hydrolysis of terminal non-reducing beta-D-galactose residues in beta-D-galactosides.. This chain is Beta-galactosidase, found in Aeromonas hydrophila subsp. hydrophila (strain ATCC 7966 / DSM 30187 / BCRC 13018 / CCUG 14551 / JCM 1027 / KCTC 2358 / NCIMB 9240 / NCTC 8049).